Consider the following 204-residue polypeptide: Probable GTP-binding protein EngB (204 aa).

Positions Gly-22 to Ile-197 constitute an EngB-type G domain. GTP-binding positions include Gly-30–Ser-37, Gly-57–Gln-61, Asp-75–Gly-78, Asn-144–Asp-147, and Phe-176–Ala-178. The Mg(2+) site is built by Ser-37 and Thr-59.

This sequence belongs to the TRAFAC class TrmE-Era-EngA-EngB-Septin-like GTPase superfamily. EngB GTPase family. It depends on Mg(2+) as a cofactor.

Necessary for normal cell division and for the maintenance of normal septation. The sequence is that of Probable GTP-binding protein EngB from Ruminiclostridium cellulolyticum (strain ATCC 35319 / DSM 5812 / JCM 6584 / H10) (Clostridium cellulolyticum).